The sequence spans 290 residues: Non-homologous end joining protein Ku (290 aa).

Residues 11–183 (TFGLISMPVR…EAPKITSEVK (173 aa)) enclose the Ku domain. The segment at 253–290 (MKDQKKGSRLAEVDKESTVQMTPKKPAVKERRGRKRVA) is disordered. A compositionally biased stretch (basic and acidic residues) spans 254–269 (KDQKKGSRLAEVDKES).

The protein belongs to the prokaryotic Ku family. In terms of assembly, homodimer. Interacts with LigD.

In terms of biological role, with LigD forms a non-homologous end joining (NHEJ) DNA repair enzyme, which repairs dsDNA breaks with reduced fidelity. Binds linear dsDNA with 5'- and 3'- overhangs but not closed circular dsDNA nor ssDNA. Recruits and stimulates the ligase activity of LigD. This Koribacter versatilis (strain Ellin345) protein is Non-homologous end joining protein Ku.